The following is a 508-amino-acid chain: Glycerol kinase (508 aa).

Thr-14 provides a ligand contact to ADP. Thr-14, Thr-15, and Ser-16 together coordinate ATP. Thr-14 contributes to the sn-glycerol 3-phosphate binding site. Arg-18 serves as a coordination point for ADP. Sn-glycerol 3-phosphate-binding residues include Arg-84, Glu-85, and Tyr-136. Glycerol-binding residues include Arg-84, Glu-85, and Tyr-136. His-232 carries the post-translational modification Phosphohistidine; by HPr. Asp-246 lines the sn-glycerol 3-phosphate pocket. 2 residues coordinate glycerol: Asp-246 and Gln-247. The ADP site is built by Thr-268 and Gly-311. ATP-binding residues include Thr-268, Gly-311, Gln-315, and Gly-412. Gly-412 and Asn-416 together coordinate ADP.

The protein belongs to the FGGY kinase family. Homotetramer and homodimer (in equilibrium). Post-translationally, the phosphoenolpyruvate-dependent sugar phosphotransferase system (PTS), including enzyme I, and histidine-containing protein (HPr) are required for the phosphorylation, which leads to the activation of the enzyme.

The catalysed reaction is glycerol + ATP = sn-glycerol 3-phosphate + ADP + H(+). It participates in polyol metabolism; glycerol degradation via glycerol kinase pathway; sn-glycerol 3-phosphate from glycerol: step 1/1. Its activity is regulated as follows. Activated by phosphorylation and inhibited by fructose 1,6-bisphosphate (FBP). Its function is as follows. Key enzyme in the regulation of glycerol uptake and metabolism. Catalyzes the phosphorylation of glycerol to yield sn-glycerol 3-phosphate. This chain is Glycerol kinase, found in Streptococcus pyogenes serotype M4 (strain MGAS10750).